A 441-amino-acid chain; its full sequence is Anti-sigma-I factor RsgI (441 aa).

The Cytoplasmic segment spans residues 1–53 (MMNKGIVMDIKKHSVVVLTPNGEFITCKRKGDSCMIGEEISFDEQEQKASRFS). Positions 3–51 (NKGIVMDIKKHSVVVLTPNGEFITCKRKGDSCMIGEEISFDEQEQKASR) constitute a RsgI N-terminal anti-sigma domain. The chain crosses the membrane as a helical span at residues 54-76 (IPYFLKPASLLVACFLCALLFFY). Topologically, residues 77–441 (NQPEEKVFAY…HQQGNEKKNQ (365 aa)) are extracellular. A disordered region spans residues 213 to 441 (ENEKNKSVTP…HQQGNEKKNQ (229 aa)). The segment covering 219 to 230 (SVTPPATPSNPV) has biased composition (polar residues). The segment covering 240-251 (PDSSPDVVPDLS) has biased composition (low complexity). Over residues 252–281 (SVKDKKYEKPEYKEQKKIEEQPTKQIKENN) the composition is skewed to basic and acidic residues. Low complexity-rich tracts occupy residues 282-328 (GRGS…QQGN), 336-358 (NNGH…QQGN), and 366-408 (NNGH…NGRG). Polar residues predominate over residues 411 to 428 (KENVGNEQGNNGRGSQQE). Residues 429 to 441 (NRGHQQGNEKKNQ) show a composition bias toward basic and acidic residues.

In terms of assembly, interacts (via RsgI N-terminal anti-sigma domain) with SigI.

Its subcellular location is the cell membrane. Functionally, anti-sigma factor for SigI. Negatively regulates SigI activity through direct interaction. Has no direct effect on virulence gene expression. The sequence is that of Anti-sigma-I factor RsgI from Bacillus anthracis.